We begin with the raw amino-acid sequence, 213 residues long: Orotate phosphoribosyltransferase (213 aa).

Residue K26 participates in 5-phospho-alpha-D-ribose 1-diphosphate binding. An orotate-binding site is contributed by 34-35 (FF). Residues 72-73 (YK), R99, K100, K103, H105, and 124-132 (DDVITAGTA) contribute to the 5-phospho-alpha-D-ribose 1-diphosphate site. 2 residues coordinate orotate: T128 and R156.

Belongs to the purine/pyrimidine phosphoribosyltransferase family. PyrE subfamily. In terms of assembly, homodimer. Mg(2+) serves as cofactor.

The catalysed reaction is orotidine 5'-phosphate + diphosphate = orotate + 5-phospho-alpha-D-ribose 1-diphosphate. Its pathway is pyrimidine metabolism; UMP biosynthesis via de novo pathway; UMP from orotate: step 1/2. In terms of biological role, catalyzes the transfer of a ribosyl phosphate group from 5-phosphoribose 1-diphosphate to orotate, leading to the formation of orotidine monophosphate (OMP). The protein is Orotate phosphoribosyltransferase of Aliivibrio fischeri (strain MJ11) (Vibrio fischeri).